The primary structure comprises 410 residues: MTYLELLALLALQSVVTGATFPDETITEWSVNMYNHLRGTGEDENILFSPLSIALAMGMMELGAQGSTRKEIRHSMGYEGLKGGEEFSFLRDFSNMASAEENQYVMKLANSLFVQNGFHVNEEFLQMLKMYFNAEVNHVDFSQNVAVANSINKWVENYTNSLLKDLVSPEDFDGVTNLALINAVYFKGNWKSQFRPENTRTFSFTKDDESEVQIPMMYQQGEFYYGEFSDGSNEAGGIYQVLEIPYEGDEISMMLALSRQEVPLATLEPLLKAQLIEEWANSVKKQKVEVYLPRFTVEQEIDLKDILKALGVTEIFIKDANLTAMSDKKELFLSKAVHKSCIEVNEEGSEAAAASGMIAISRMAVLYPQVIVDHPFLYLIRNRKSGIILFMGRVMNPETMNTSGHDFEEL.

An N-terminal signal peptide occupies residues Met-1–Val-16. 3 N-linked (GlcNAc...) asparagine glycosylation sites follow: Asn-157, Asn-321, and Asn-401. The O-linked (Xyl...) (chondroitin sulfate) serine glycan is linked to Ser-403.

This sequence belongs to the serpin family. Detected in neurons in embryonic brain cortex (at protein level). During embryonic development mostly expressed in CNS. In adult expressed in brain and much less in spinal cord, heart, kidney and testis.

Its subcellular location is the secreted. It is found in the cytoplasmic vesicle. The protein resides in the secretory vesicle lumen. The protein localises to the perikaryon. Functionally, serine protease inhibitor that inhibits plasminogen activators and plasmin but not thrombin. May be involved in the formation or reorganization of synaptic connections as well as for synaptic plasticity in the adult nervous system. May protect neurons from cell damage by tissue-type plasminogen activator. The sequence is that of Neuroserpin (Serpini1) from Mus musculus (Mouse).